The following is a 96-amino-acid chain: UPF0235 protein Acid345_4205 (96 aa).

Belongs to the UPF0235 family.

The polypeptide is UPF0235 protein Acid345_4205 (Koribacter versatilis (strain Ellin345)).